Reading from the N-terminus, the 477-residue chain is Argininosuccinate lyase (477 aa).

It belongs to the lyase 1 family. Argininosuccinate lyase subfamily.

The protein localises to the cytoplasm. It carries out the reaction 2-(N(omega)-L-arginino)succinate = fumarate + L-arginine. The protein operates within amino-acid biosynthesis; L-arginine biosynthesis; L-arginine from L-ornithine and carbamoyl phosphate: step 3/3. The polypeptide is Argininosuccinate lyase (Streptomyces avermitilis (strain ATCC 31267 / DSM 46492 / JCM 5070 / NBRC 14893 / NCIMB 12804 / NRRL 8165 / MA-4680)).